Here is a 435-residue protein sequence, read N- to C-terminus: Gamma-glutamyl phosphate reductase (435 aa).

It belongs to the gamma-glutamyl phosphate reductase family.

The protein resides in the cytoplasm. The catalysed reaction is L-glutamate 5-semialdehyde + phosphate + NADP(+) = L-glutamyl 5-phosphate + NADPH + H(+). It functions in the pathway amino-acid biosynthesis; L-proline biosynthesis; L-glutamate 5-semialdehyde from L-glutamate: step 2/2. Catalyzes the NADPH-dependent reduction of L-glutamate 5-phosphate into L-glutamate 5-semialdehyde and phosphate. The product spontaneously undergoes cyclization to form 1-pyrroline-5-carboxylate. This Synechococcus sp. (strain CC9605) protein is Gamma-glutamyl phosphate reductase.